The sequence spans 191 residues: Large ribosomal subunit protein uL6B (191 aa).

The protein belongs to the universal ribosomal protein uL6 family. As to quaternary structure, component of the large ribosomal subunit (LSU). Mature yeast ribosomes consist of a small (40S) and a large (60S) subunit. The 40S small subunit contains 1 molecule of ribosomal RNA (18S rRNA) and 33 different proteins (encoded by 57 genes). The large 60S subunit contains 3 rRNA molecules (25S, 5.8S and 5S rRNA) and 46 different proteins (encoded by 81 genes).

The protein resides in the cytoplasm. Its function is as follows. Component of the ribosome, a large ribonucleoprotein complex responsible for the synthesis of proteins in the cell. The small ribosomal subunit (SSU) binds messenger RNAs (mRNAs) and translates the encoded message by selecting cognate aminoacyl-transfer RNA (tRNA) molecules. The large subunit (LSU) contains the ribosomal catalytic site termed the peptidyl transferase center (PTC), which catalyzes the formation of peptide bonds, thereby polymerizing the amino acids delivered by tRNAs into a polypeptide chain. The nascent polypeptides leave the ribosome through a tunnel in the LSU and interact with protein factors that function in enzymatic processing, targeting, and the membrane insertion of nascent chains at the exit of the ribosomal tunnel. This Saccharomyces cerevisiae (strain ATCC 204508 / S288c) (Baker's yeast) protein is Large ribosomal subunit protein uL6B.